A 217-amino-acid polypeptide reads, in one-letter code: Large ribosomal subunit protein uL3 (217 aa).

Residues 133 to 145 (GRASHGNSRSHNV) show a composition bias toward polar residues. Positions 133–153 (GRASHGNSRSHNVPGSIGMAQ) are disordered. Residue Q153 is modified to N5-methylglutamine.

The protein belongs to the universal ribosomal protein uL3 family. Part of the 50S ribosomal subunit. Forms a cluster with proteins L14 and L19. Methylated by PrmB.

In terms of biological role, one of the primary rRNA binding proteins, it binds directly near the 3'-end of the 23S rRNA, where it nucleates assembly of the 50S subunit. The polypeptide is Large ribosomal subunit protein uL3 (Ralstonia pickettii (strain 12J)).